Here is a 402-residue protein sequence, read N- to C-terminus: Argininosuccinate synthase (402 aa).

Residues 10–18 and Ala-37 each bind ATP; that span reads AYSGGLDTS. Tyr-88 and Ser-93 together coordinate L-citrulline. Gly-118 is an ATP binding site. Residues Thr-120, Asn-124, and Asp-125 each contribute to the L-aspartate site. An L-citrulline-binding site is contributed by Asn-124. L-citrulline is bound by residues Arg-128, Ser-179, Ser-188, Glu-264, and Tyr-276.

The protein belongs to the argininosuccinate synthase family. Type 1 subfamily. As to quaternary structure, homotetramer.

It localises to the cytoplasm. It catalyses the reaction L-citrulline + L-aspartate + ATP = 2-(N(omega)-L-arginino)succinate + AMP + diphosphate + H(+). Its pathway is amino-acid biosynthesis; L-arginine biosynthesis; L-arginine from L-ornithine and carbamoyl phosphate: step 2/3. This is Argininosuccinate synthase from Alkalilimnicola ehrlichii (strain ATCC BAA-1101 / DSM 17681 / MLHE-1).